The chain runs to 236 residues: Purine nucleoside phosphorylase DeoD-type (236 aa).

Position 4 (histidine 4) interacts with a purine D-ribonucleoside. Phosphate is bound by residues glycine 20, arginine 24, arginine 43, and 87–90 (RVGT). Residues 179–181 (EME) and 203–204 (SD) each bind a purine D-ribonucleoside. Residue aspartate 204 is the Proton donor of the active site.

Belongs to the PNP/UDP phosphorylase family. In terms of assembly, homohexamer; trimer of homodimers.

The catalysed reaction is a purine D-ribonucleoside + phosphate = a purine nucleobase + alpha-D-ribose 1-phosphate. The enzyme catalyses a purine 2'-deoxy-D-ribonucleoside + phosphate = a purine nucleobase + 2-deoxy-alpha-D-ribose 1-phosphate. Its function is as follows. Catalyzes the reversible phosphorolytic breakdown of the N-glycosidic bond in the beta-(deoxy)ribonucleoside molecules, with the formation of the corresponding free purine bases and pentose-1-phosphate. The chain is Purine nucleoside phosphorylase DeoD-type from Streptococcus pneumoniae serotype 2 (strain D39 / NCTC 7466).